The primary structure comprises 405 residues: Phosphopentomutase (405 aa).

The Mn(2+) site is built by D10, D303, H308, D344, H345, and H356.

Belongs to the phosphopentomutase family. Mn(2+) is required as a cofactor.

The protein resides in the cytoplasm. The catalysed reaction is 2-deoxy-alpha-D-ribose 1-phosphate = 2-deoxy-D-ribose 5-phosphate. The enzyme catalyses alpha-D-ribose 1-phosphate = D-ribose 5-phosphate. It participates in carbohydrate degradation; 2-deoxy-D-ribose 1-phosphate degradation; D-glyceraldehyde 3-phosphate and acetaldehyde from 2-deoxy-alpha-D-ribose 1-phosphate: step 1/2. In terms of biological role, isomerase that catalyzes the conversion of deoxy-ribose 1-phosphate (dRib-1-P) and ribose 1-phosphate (Rib-1-P) to deoxy-ribose 5-phosphate (dRib-5-P) and ribose 5-phosphate (Rib-5-P), respectively. In Shewanella frigidimarina (strain NCIMB 400), this protein is Phosphopentomutase.